Consider the following 499-residue polypeptide: Hepatic triacylglycerol lipase (499 aa).

The signal sequence occupies residues 1–22 (MDTSPLCFSILLVLCIFIQSSA). Residues Asn42 and Asn78 are each glycosylated (N-linked (GlcNAc...) asparagine). The Nucleophile role is filled by Ser168. Asp194 functions as the Charge relay system in the catalytic mechanism. Residues 254–277 (CHFLELYRHIAQHGFNAITQTIKC) form an essential for determining substrate specificity region. Catalysis depends on His279, which acts as the Charge relay system. The PLAT domain occupies 352-486 (YHYQFKIQFI…RPTQEKIFVK (135 aa)). N-linked (GlcNAc...) asparagine glycosylation is found at Asn362 and Asn397.

This sequence belongs to the AB hydrolase superfamily. Lipase family. In terms of assembly, homodimer.

Its subcellular location is the secreted. The enzyme catalyses a triacylglycerol + H2O = a diacylglycerol + a fatty acid + H(+). It catalyses the reaction a 1-acyl-sn-glycero-3-phosphocholine + H2O = sn-glycerol 3-phosphocholine + a fatty acid + H(+). The catalysed reaction is a 1,2-diacyl-sn-glycero-3-phosphocholine + H2O = a 2-acyl-sn-glycero-3-phosphocholine + a fatty acid + H(+). It carries out the reaction 1,2,3-tri-(9Z-octadecenoyl)-glycerol + H2O = di-(9Z)-octadecenoylglycerol + (9Z)-octadecenoate + H(+). The enzyme catalyses 1,2-di-(9Z-octadecenoyl)-sn-glycero-3-phosphocholine + H2O = (9Z-octadecenoyl)-sn-glycero-3-phosphocholine + (9Z)-octadecenoate + H(+). It catalyses the reaction 1,2,3-tributanoylglycerol + H2O = dibutanoylglycerol + butanoate + H(+). The catalysed reaction is 1,2-dihexadecanoyl-sn-glycero-3-phosphocholine + H2O = hexadecanoyl-sn-glycero-3-phosphocholine + hexadecanoate + H(+). It carries out the reaction 1,2-di-(9Z-octadecenoyl)-sn-glycerol + H2O = 2-(9Z-octadecenoyl)-glycerol + (9Z)-octadecenoate + H(+). The enzyme catalyses 1,2,3-tri-(9Z-octadecenoyl)-glycerol + H2O = 2,3-di-(9Z)-octadecenoyl-sn-glycerol + (9Z)-octadecenoate + H(+). It catalyses the reaction 1-(9Z-octadecenoyl)-sn-glycero-3-phospho-L-serine + H2O = sn-glycero-3-phospho-L-serine + (9Z)-octadecenoate + H(+). The catalysed reaction is 1-hexadecanoyl-sn-glycero-3-phosphocholine + H2O = sn-glycerol 3-phosphocholine + hexadecanoate + H(+). It carries out the reaction 1,3-di-(9Z-octadecenoyl)-glycerol + H2O = 3-(9Z-octadecenoyl)-sn-glycerol + (9Z)-octadecenoate + H(+). Phospholipase A1 and triacylglycerol lipase are inhibited by sphingomyelin. Functionally, catalyzes the hydrolysis of triglycerides and phospholipids present in circulating plasma lipoproteins, including chylomicrons, intermediate density lipoproteins (IDL), low density lipoproteins (LDL) of large size and high density lipoproteins (HDL), releasing free fatty acids (FFA) and smaller lipoprotein particles. Also exhibits lysophospholipase activity. Can hydrolyze both neutral lipid and phospholipid substrates but shows a greater binding affinity for neutral lipid substrates than phospholipid substrates. In native LDL, preferentially hydrolyzes the phosphatidylcholine species containing polyunsaturated fatty acids at sn-2 position. The sequence is that of Hepatic triacylglycerol lipase (LIPC) from Homo sapiens (Human).